Consider the following 501-residue polypeptide: Dye-decolorizing peroxidase (501 aa).

A signal peptide spans 1–21; the sequence is MRLSPSFLSLALVIFVGEVVA. Positions 22–60 are excised as a propeptide; that stretch reads RNVVARASNPASVTGTRKVSLLKNVAGLPAVPTAQQVAV. The active-site Proton acceptor is the D228. N352 carries N-linked (GlcNAc...) asparagine glycosylation. Position 367 (H367) interacts with heme. N-linked (GlcNAc...) asparagine glycosylation occurs at N403.

The protein belongs to the DyP-type peroxidase family. It depends on heme b as a cofactor.

The protein localises to the secreted. The enzyme catalyses Reactive Blue 5 + 2 H2O2 = 2,2'-disulfonyl azobenzene + 3-[(4-amino-6-chloro-1,3,5-triazin-2-yl)amino]benzenesulfonate + phthalate + 2 H2O + 2 H(+). The catalysed reaction is 2 a phenolic donor + H2O2 = 2 a phenolic radical donor + 2 H2O. In terms of biological role, manganese-independent peroxidase that is able to convert a large number of compounds, but its physiological substrate is not known. In addition to classic peroxidase substrates (e.g. 2,6-dimethoxyphenol), oxidizes dyes such as Reactive Blue 5 and Reactive Black 5. The sequence is that of Dye-decolorizing peroxidase from Exidia glandulosa (Black witch's butter).